The chain runs to 272 residues: ATP synthase subunit a (272 aa).

Transmembrane regions (helical) follow at residues 39-59, 103-123, 124-144, 152-172, 181-201, 221-241, and 242-262; these read GFWA…LIFI, VAPL…LKWI, PVDY…KIVP, FGIS…VKGV, FTPF…IIGL, VVFI…NVPW, and AIFH…LTVV.

This sequence belongs to the ATPase A chain family. In terms of assembly, F-type ATPases have 2 components, CF(1) - the catalytic core - and CF(0) - the membrane proton channel. CF(1) has five subunits: alpha(3), beta(3), gamma(1), delta(1), epsilon(1). CF(0) has three main subunits: a(1), b(2) and c(9-12). The alpha and beta chains form an alternating ring which encloses part of the gamma chain. CF(1) is attached to CF(0) by a central stalk formed by the gamma and epsilon chains, while a peripheral stalk is formed by the delta and b chains.

Its subcellular location is the cell inner membrane. In terms of biological role, key component of the proton channel; it plays a direct role in the translocation of protons across the membrane. This Ectopseudomonas mendocina (strain ymp) (Pseudomonas mendocina) protein is ATP synthase subunit a.